The chain runs to 318 residues: MIKVVFMGTPDFSVPILKQLIEDGYNIAAVVTQPDKPKGRKRELTPPPVKVEAEKHGIPVLQPTKIREKEQYEQVLAFKPDLIVTAAFGQILPKALLDAPKYGCINVHASLLPELRGGAPIHYAILQGKTKTGVTIMYMVEKLDAGDILTQVEVPITETDTVGTLHDKLSIAGAKLLSETIPQLVAGKLTPIKQDDEKATYAYNIKREQEKIDWTKPGEDIYNHIRGLHPWPVAYTTFAGNVWKVWWGEKVPAPKKAEPGTIIDIVQDGIVVATGNETAIKITELQPAGKKRMNAAQFLRGAGAHLTIGMKLGDEHES.

(6S)-5,6,7,8-tetrahydrofolate is bound at residue 110–113 (SLLP).

Belongs to the Fmt family.

The enzyme catalyses L-methionyl-tRNA(fMet) + (6R)-10-formyltetrahydrofolate = N-formyl-L-methionyl-tRNA(fMet) + (6S)-5,6,7,8-tetrahydrofolate + H(+). Its function is as follows. Attaches a formyl group to the free amino group of methionyl-tRNA(fMet). The formyl group appears to play a dual role in the initiator identity of N-formylmethionyl-tRNA by promoting its recognition by IF2 and preventing the misappropriation of this tRNA by the elongation apparatus. In Geobacillus sp. (strain WCH70), this protein is Methionyl-tRNA formyltransferase.